Reading from the N-terminus, the 686-residue chain is MAM domain-containing protein 2 (686 aa).

Residues 1–18 form the signal peptide; the sequence is MLLRGVLLALQALQLAGA. MAM domains are found at residues 24 to 169, 168 to 329, 340 to 498, and 507 to 666; these read GSCA…YCIE, IECD…HCQN, ASCN…SCSS, and GECT…PCGE. Residues N134 and N329 are each glycosylated (N-linked (GlcNAc...) asparagine). 2 disordered regions span residues 521-543 and 665-686; these read EKRN…TGPK and GEME…EIEY. N524 carries N-linked (GlcNAc...) asparagine glycosylation.

Post-translationally, O-glycosylated.

The protein localises to the secreted. It localises to the extracellular space. Its subcellular location is the extracellular matrix. The chain is MAM domain-containing protein 2 (MAMDC2) from Homo sapiens (Human).